A 95-amino-acid chain; its full sequence is Secretoglobin family 2A member 2 (95 aa).

The first 18 residues, 1-18 (MKLVFLFLLVTIPICCYA), serve as a signal peptide directing secretion. Asn-35 is a glycosylation site (N-linked (GlcNAc...) asparagine).

This sequence belongs to the secretoglobin family. Lipophilin subfamily. As to quaternary structure, prostatein is composed of three different peptides called C1, C2 and C3. These form covalent C1:C3 (F) and C2:C3 (S) heterodimers whose non-covalent association forms tetrameric (C1:C3/C3:C2) prostatein molecules. Highly expressed in ventral prostate.

Its subcellular location is the secreted. Its function is as follows. Part of prostatein which is the major secretory glycoprotein of ventral prostate gland. Steroid-binding protein; can bind non-polar steroids, cholesterol and a group of small proline-rich peptides. The chain is Secretoglobin family 2A member 2 (Scgb2a2) from Rattus norvegicus (Rat).